The primary structure comprises 266 residues: Ribonuclease HII (266 aa).

Positions 19–38 are disordered; sequence HPGMIRDKEKPAPTKPGKGV. In terms of domain architecture, RNase H type-2 spans 58–246; that stretch reads WPVAGCDEAG…VVAARQKHQP (189 aa). A divalent metal cation contacts are provided by D64, E65, and D155.

The protein belongs to the RNase HII family. It depends on Mn(2+) as a cofactor. The cofactor is Mg(2+).

It is found in the cytoplasm. It carries out the reaction Endonucleolytic cleavage to 5'-phosphomonoester.. Functionally, endonuclease that specifically degrades the RNA of RNA-DNA hybrids. The protein is Ribonuclease HII of Rhodopseudomonas palustris (strain BisB18).